The sequence spans 496 residues: Protein nucleotidyltransferase YdiU (496 aa).

Positions 98, 100, 101, 116, 128, 129, 179, and 186 each coordinate ATP. The active-site Proton acceptor is Asp259. 2 residues coordinate Mg(2+): Asn260 and Asp269. Asp269 is a binding site for ATP.

This sequence belongs to the SELO family. Mg(2+) is required as a cofactor. It depends on Mn(2+) as a cofactor.

The catalysed reaction is L-seryl-[protein] + ATP = 3-O-(5'-adenylyl)-L-seryl-[protein] + diphosphate. It carries out the reaction L-threonyl-[protein] + ATP = 3-O-(5'-adenylyl)-L-threonyl-[protein] + diphosphate. It catalyses the reaction L-tyrosyl-[protein] + ATP = O-(5'-adenylyl)-L-tyrosyl-[protein] + diphosphate. The enzyme catalyses L-histidyl-[protein] + UTP = N(tele)-(5'-uridylyl)-L-histidyl-[protein] + diphosphate. The catalysed reaction is L-seryl-[protein] + UTP = O-(5'-uridylyl)-L-seryl-[protein] + diphosphate. It carries out the reaction L-tyrosyl-[protein] + UTP = O-(5'-uridylyl)-L-tyrosyl-[protein] + diphosphate. Its function is as follows. Nucleotidyltransferase involved in the post-translational modification of proteins. It can catalyze the addition of adenosine monophosphate (AMP) or uridine monophosphate (UMP) to a protein, resulting in modifications known as AMPylation and UMPylation. The chain is Protein nucleotidyltransferase YdiU from Albidiferax ferrireducens (strain ATCC BAA-621 / DSM 15236 / T118) (Rhodoferax ferrireducens).